A 347-amino-acid polypeptide reads, in one-letter code: Dihydroorotase (347 aa).

Zn(2+) contacts are provided by His14 and His16. Residues 16-18 (HLR) and Asn42 contribute to the substrate site. Positions 100, 137, and 175 each coordinate Zn(2+). N6-carboxylysine is present on Lys100. His137 contacts substrate. Leu220 is a binding site for substrate. Residue Asp248 participates in Zn(2+) binding. Asp248 is an active-site residue. The substrate site is built by His252 and Ala264.

It belongs to the metallo-dependent hydrolases superfamily. DHOase family. Class II DHOase subfamily. As to quaternary structure, homodimer. The cofactor is Zn(2+).

The catalysed reaction is (S)-dihydroorotate + H2O = N-carbamoyl-L-aspartate + H(+). It participates in pyrimidine metabolism; UMP biosynthesis via de novo pathway; (S)-dihydroorotate from bicarbonate: step 3/3. Catalyzes the reversible cyclization of carbamoyl aspartate to dihydroorotate. The chain is Dihydroorotase from Stutzerimonas stutzeri (strain A1501) (Pseudomonas stutzeri).